We begin with the raw amino-acid sequence, 436 residues long: Eukaryotic translation initiation factor 5 (436 aa).

Residue glycine 27–threonine 34 coordinates GTP. The interval asparagine 177–serine 203 is disordered. Positions asparagine 184 to proline 195 are enriched in acidic residues. The 164-residue stretch at glutamate 216–glutamate 379 folds into the W2 domain. The segment covering leucine 396–glutamine 408 has biased composition (basic and acidic residues). Positions leucine 396–isoleucine 436 are disordered. Residues glutamine 409 to alanine 425 are compositionally biased toward low complexity. The span at asparagine 426–isoleucine 436 shows a compositional bias: acidic residues.

It belongs to the eIF-2-beta/eIF-5 family.

In terms of biological role, catalyzes the hydrolysis of GTP bound to the 40S ribosomal initiation complex (40S.mRNA.Met-tRNA[F].eIF-2.GTP) with the subsequent joining of a 60S ribosomal subunit resulting in the release of eIF-2 and the guanine nucleotide. The subsequent joining of a 60S ribosomal subunit results in the formation of a functional 80S initiation complex (80S.mRNA.Met-tRNA[F]). This Caenorhabditis elegans protein is Eukaryotic translation initiation factor 5.